The chain runs to 468 residues: Peroxisome proliferator-activated receptor alpha (468 aa).

Positions 99-173 (NIECRICGDK…VGMSHNAIRF (75 aa)) form a DNA-binding region, nuclear receptor. NR C4-type zinc fingers lie at residues 102–122 (CRICGDKASGYHYGVHACEGC) and 139–161 (CDRSCKIQKKNRNKCQYCRFHKC). One can recognise an NR LBD domain in the interval 239–466 (FVIHDMETLC…HPLLQEIYRD (228 aa)). Residues Ser-280, Tyr-314, and Tyr-464 each contribute to the indeglitazar site. The interval 304-433 (DQVTLLKYGV…PKLLQKMADL (130 aa)) is required for heterodimerization with RXRA.

The protein belongs to the nuclear hormone receptor family. NR1 subfamily. In terms of assembly, heterodimer; with RXRA. This heterodimerization is required for DNA binding and transactivation activity. Interacts with NCOA3 coactivator. Interacts with CITED2; the interaction stimulates its transcriptional activity. Also interacts with PPARBP in vitro. Interacts with AKAP13, LPIN1, PRDM16 and coactivator NCOA6. Interacts with ASXL1 and ASXL2. Interacts with PER2. Interacts with SIRT1; the interaction seems to be modulated by NAD(+) levels. Interacts with CRY1 and CRY2. In hepatocytes, interacts with PAQR3 and HUWE1; the interactions promote PPARA poylubiquitination and HUWE1-mediated degradation. In terms of processing, ubiquitinated by E3 ubiquitin-protein ligase HUWE1; leading to proteasomal degradation. Phosphorylated. As to expression, skeletal muscle, liver, heart and kidney. Expressed in monocytes.

The protein resides in the nucleus. Ligand-activated transcription factor. Key regulator of lipid metabolism. Activated by the endogenous ligand 1-palmitoyl-2-oleoyl-sn-glycerol-3-phosphocholine (16:0/18:1-GPC). Activated by oleylethanolamide, a naturally occurring lipid that regulates satiety. Receptor for peroxisome proliferators such as hypolipidemic drugs and fatty acids. Regulates the peroxisomal beta-oxidation pathway of fatty acids. Functions as a transcription activator for the ACOX1 and P450 genes. Transactivation activity requires heterodimerization with RXRA and is antagonized by NR2C2. May be required for the propagation of clock information to metabolic pathways regulated by PER2. In Homo sapiens (Human), this protein is Peroxisome proliferator-activated receptor alpha (PPARA).